Here is a 146-residue protein sequence, read N- to C-terminus: Hemoglobin subunit beta (146 aa).

Val-1 carries the post-translational modification N-acetylvaline. The region spanning 2-146 (HLTAEEKSAV…VANALAHKYH (145 aa)) is the Globin domain. Position 12 is a phosphothreonine (Thr-12). Lys-59 is modified (N6-acetyllysine). A heme b-binding site is contributed by His-63. Lys-82 bears the N6-acetyllysine mark. Position 92 (His-92) interacts with heme b. At Cys-93 the chain carries S-nitrosocysteine. An N6-acetyllysine modification is found at Lys-144.

This sequence belongs to the globin family. Heterotetramer of two alpha chains and two beta chains. As to expression, red blood cells.

Functionally, involved in oxygen transport from the lung to the various peripheral tissues. In Balaenoptera acutorostrata (Common minke whale), this protein is Hemoglobin subunit beta (HBB).